A 710-amino-acid polypeptide reads, in one-letter code: uncharacterized protein (710 aa).

Coiled-coil stretches lie at residues 273–298 (LYRQ…MEEG) and 477–528 (RYEK…VADT).

This is an uncharacterized protein from Coxiella burnetii (strain RSA 493 / Nine Mile phase I).